The sequence spans 392 residues: Formate-dependent phosphoribosylglycinamide formyltransferase (392 aa).

N(1)-(5-phospho-beta-D-ribosyl)glycinamide-binding positions include 20–21 (EL) and E80. Residues R112, K153, 158–163 (SSGKGQ), 193–196 (EGFV), and E201 contribute to the ATP site. The 190-residue stretch at 117–306 (RLAAETLGLP…EFALHVRAIL (190 aa)) folds into the ATP-grasp domain. Positions 265 and 277 each coordinate Mg(2+). N(1)-(5-phospho-beta-D-ribosyl)glycinamide-binding positions include D284, K355, and 362–363 (RR).

Belongs to the PurK/PurT family. Homodimer.

It catalyses the reaction N(1)-(5-phospho-beta-D-ribosyl)glycinamide + formate + ATP = N(2)-formyl-N(1)-(5-phospho-beta-D-ribosyl)glycinamide + ADP + phosphate + H(+). The protein operates within purine metabolism; IMP biosynthesis via de novo pathway; N(2)-formyl-N(1)-(5-phospho-D-ribosyl)glycinamide from N(1)-(5-phospho-D-ribosyl)glycinamide (formate route): step 1/1. Involved in the de novo purine biosynthesis. Catalyzes the transfer of formate to 5-phospho-ribosyl-glycinamide (GAR), producing 5-phospho-ribosyl-N-formylglycinamide (FGAR). Formate is provided by PurU via hydrolysis of 10-formyl-tetrahydrofolate. The polypeptide is Formate-dependent phosphoribosylglycinamide formyltransferase (Aeromonas hydrophila subsp. hydrophila (strain ATCC 7966 / DSM 30187 / BCRC 13018 / CCUG 14551 / JCM 1027 / KCTC 2358 / NCIMB 9240 / NCTC 8049)).